A 260-amino-acid chain; its full sequence is UPF0246 protein Veis_4789 (260 aa).

This sequence belongs to the UPF0246 family.

The chain is UPF0246 protein Veis_4789 from Verminephrobacter eiseniae (strain EF01-2).